The primary structure comprises 273 residues: MAPKKAVAAPEGGNKENAAVKGSSKVKVKRKSIKLVKTQSHPPTLSMVVEVLKKNTERKGTSVQAIRTRILSAHPTVDPLRLKFLLRTALNKGLEKGILIRPLNSSATGATGRFKLAKPVKTTKAGKENVASENVDPNAEQETQKKAPKKEKKAKTEKEPKGEKTKAVAKKAKEDSDEKPKVAKSKKDKEAKEVDKANKEAKEVDKANKEAKEVDKAPAKKPKAKTEAAKAEGGGKAKKEPPKAKAKDVKAQKDSTDEGAPVKAGKKGKKVTN.

The disordered stretch occupies residues 1–24 (MAPKKAVAAPEGGNKENAAVKGSS). The 79-residue stretch at 40 to 118 (SHPPTLSMVV…GATGRFKLAK (79 aa)) folds into the H15 domain. The disordered stretch occupies residues 120-273 (VKTTKAGKEN…AGKKGKKVTN (154 aa)). A compositionally biased stretch (basic and acidic residues) spans 154–256 (AKTEKEPKGE…KDVKAQKDST (103 aa)). A run of 3 repeats spans residues 189 to 198 (KEAKEVDKAN), 199 to 208 (KEAKEVDKAN), and 209 to 217 (KEAKEVDKA). The 3 X 10 AA tandem repeats stretch occupies residues 189 to 217 (KEAKEVDKANKEAKEVDKANKEAKEVDKA). Residues 264–273 (AGKKGKKVTN) are compositionally biased toward basic residues.

This sequence belongs to the histone H1/H5 family. As to quaternary structure, interacts with nap1l1.

Its subcellular location is the nucleus. It localises to the chromosome. This Xenopus laevis (African clawed frog) protein is Protein B4 (b4).